A 475-amino-acid polypeptide reads, in one-letter code: Rho GTPase-activating protein 15 (475 aa).

A compositionally biased stretch (polar residues) spans 1–22; sequence MQKSTNSDTSVETLNSTRQGTG. The tract at residues 1–23 is disordered; the sequence is MQKSTNSDTSVETLNSTRQGTGA. Residues S43, S103, S196, S199, and S243 each carry the phosphoserine modification. The 111-residue stretch at 79–189 folds into the PH domain; sequence MVEKEGYLQK…WFHAIKNAID (111 aa). Residues 281–470 form the Rho-GAP domain; the sequence is SHLHKVCERE…LMLSEYSKIF (190 aa).

Expressed in lung, liver and lymphoid cells.

It is found in the cytoplasm. The protein localises to the membrane. GTPase activator for the Rho-type GTPases by converting them to an inactive GDP-bound state. Has activity toward RAC1. Overexpression results in an increase in actin stress fibers and cell contraction. This is Rho GTPase-activating protein 15 (ARHGAP15) from Homo sapiens (Human).